We begin with the raw amino-acid sequence, 340 residues long: Heat-inducible transcription repressor HrcA (340 aa).

This sequence belongs to the HrcA family.

Negative regulator of class I heat shock genes (grpE-dnaK-dnaJ and groELS operons). Prevents heat-shock induction of these operons. The sequence is that of Heat-inducible transcription repressor HrcA from Burkholderia cenocepacia (strain ATCC BAA-245 / DSM 16553 / LMG 16656 / NCTC 13227 / J2315 / CF5610) (Burkholderia cepacia (strain J2315)).